The chain runs to 259 residues: Methyltransferase afvD (259 aa).

This sequence belongs to the class I-like SAM-binding methyltransferase superfamily.

Its pathway is secondary metabolite biosynthesis. Its function is as follows. Methyltransferase; part of the gene cluster that mediates the biosynthesis of aflavarin, a bicoumarin that exhibits anti-insectan activity against the fungivorous beetle C.hemipterus. The sequence is that of Methyltransferase afvD from Aspergillus flavus (strain ATCC 200026 / FGSC A1120 / IAM 13836 / NRRL 3357 / JCM 12722 / SRRC 167).